The chain runs to 567 residues: Phenylalanine--tRNA ligase beta subunit (567 aa).

The 76-residue stretch at 284-359 folds into the B5 domain; that stretch reads FAVRTKHVSH…RAYDFNDLTP (76 aa). 4 residues coordinate Mg(2+): Asp-337, Asp-343, Asp-346, and Asp-347.

This sequence belongs to the phenylalanyl-tRNA synthetase beta subunit family. Type 2 subfamily. Tetramer of two alpha and two beta subunits. It depends on Mg(2+) as a cofactor.

It localises to the cytoplasm. The enzyme catalyses tRNA(Phe) + L-phenylalanine + ATP = L-phenylalanyl-tRNA(Phe) + AMP + diphosphate + H(+). The protein is Phenylalanine--tRNA ligase beta subunit of Halobacterium salinarum (strain ATCC 29341 / DSM 671 / R1).